A 479-amino-acid chain; its full sequence is UDP-N-acetylmuramoyl-L-alanyl-D-glutamate--2,6-diaminopimelate ligase (479 aa).

Residue Ser-21 coordinates UDP-N-acetyl-alpha-D-muramoyl-L-alanyl-D-glutamate. Residue 98–104 (GTNGKSS) participates in ATP binding. Residues 144 to 145 (TT), Ser-171, Gln-177, and Arg-179 contribute to the UDP-N-acetyl-alpha-D-muramoyl-L-alanyl-D-glutamate site. Lys-211 bears the N6-carboxylysine mark. Meso-2,6-diaminopimelate is bound by residues Arg-372, 396 to 399 (DNPR), Gly-446, and Glu-450. Residues 396–399 (DNPR) carry the Meso-diaminopimelate recognition motif motif.

Belongs to the MurCDEF family. MurE subfamily. Mg(2+) serves as cofactor. Post-translationally, carboxylation is probably crucial for Mg(2+) binding and, consequently, for the gamma-phosphate positioning of ATP.

The protein resides in the cytoplasm. It carries out the reaction UDP-N-acetyl-alpha-D-muramoyl-L-alanyl-D-glutamate + meso-2,6-diaminopimelate + ATP = UDP-N-acetyl-alpha-D-muramoyl-L-alanyl-gamma-D-glutamyl-meso-2,6-diaminopimelate + ADP + phosphate + H(+). The protein operates within cell wall biogenesis; peptidoglycan biosynthesis. In terms of biological role, catalyzes the addition of meso-diaminopimelic acid to the nucleotide precursor UDP-N-acetylmuramoyl-L-alanyl-D-glutamate (UMAG) in the biosynthesis of bacterial cell-wall peptidoglycan. This is UDP-N-acetylmuramoyl-L-alanyl-D-glutamate--2,6-diaminopimelate ligase from Rickettsia rickettsii.